A 296-amino-acid chain; its full sequence is Glycine--tRNA ligase alpha subunit (296 aa).

This sequence belongs to the class-II aminoacyl-tRNA synthetase family. In terms of assembly, tetramer of two alpha and two beta subunits.

The protein localises to the cytoplasm. It carries out the reaction tRNA(Gly) + glycine + ATP = glycyl-tRNA(Gly) + AMP + diphosphate. In Desulfitobacterium hafniense (strain Y51), this protein is Glycine--tRNA ligase alpha subunit.